The primary structure comprises 245 residues: tRNA pseudouridine synthase A (245 aa).

The active-site Nucleophile is aspartate 52. Tyrosine 111 is a binding site for substrate.

This sequence belongs to the tRNA pseudouridine synthase TruA family. In terms of assembly, homodimer.

It catalyses the reaction uridine(38/39/40) in tRNA = pseudouridine(38/39/40) in tRNA. Its function is as follows. Formation of pseudouridine at positions 38, 39 and 40 in the anticodon stem and loop of transfer RNAs. In Ehrlichia canis (strain Jake), this protein is tRNA pseudouridine synthase A.